Here is a 1004-residue protein sequence, read N- to C-terminus: Kinesin-like protein KIN-14R (1004 aa).

Disordered regions lie at residues 1–21 (MEEE…RIGD), 61–90 (PYVD…MQHD), and 110–169 (ELFS…ATMG). Residues 63–75 (VDDDDDGNSEEEN) show a composition bias toward acidic residues. The segment covering 115 to 125 (PSPPQGPPSPS) has biased composition (pro residues). Coiled coils occupy residues 189 to 230 (CGQL…AQAS) and 266 to 338 (LNDL…LYNK). The Kinesin motor domain occupies 345–671 (NIRVFCRCRP…LNFASRVRGI (327 aa)). 428 to 435 (GQTGTGKT) is a binding site for ATP. The stretch at 691 to 742 (MAGRAKQDSKNKDAQIKSMEETIQSLEAKNKAKDLLTMNLQEKIKELEAQLL) forms a coiled coil. Disordered stretches follow at residues 759–791 (DHLH…STAE) and 946–1004 (SGRR…RQLN). A compositionally biased stretch (low complexity) spans 948-958 (RRAGAGVAGTT). A compositionally biased stretch (polar residues) spans 995-1004 (NNGTSLRQLN).

It belongs to the TRAFAC class myosin-kinesin ATPase superfamily. Kinesin family. KIN-14 subfamily.

This Oryza sativa subsp. japonica (Rice) protein is Kinesin-like protein KIN-14R.